Here is a 277-residue protein sequence, read N- to C-terminus: Phosphatidylglycerol--prolipoprotein diacylglyceryl transferase (277 aa).

The next 4 helical transmembrane spans lie at 18–38, 51–71, 89–109, and 116–136; these read ISVK…LLLA, IIVD…RIYY, IWHG…TAVI, and ISFW…QAIG. A 1,2-diacyl-sn-glycero-3-phospho-(1'-sn-glycerol) is bound at residue arginine 137. Transmembrane regions (helical) follow at residues 177–197, 205–225, and 235–255; these read QPTF…LLII, GELF…IEGM, and FRVS…LIIY.

This sequence belongs to the Lgt family.

The protein resides in the cell membrane. It carries out the reaction L-cysteinyl-[prolipoprotein] + a 1,2-diacyl-sn-glycero-3-phospho-(1'-sn-glycerol) = an S-1,2-diacyl-sn-glyceryl-L-cysteinyl-[prolipoprotein] + sn-glycerol 1-phosphate + H(+). It participates in protein modification; lipoprotein biosynthesis (diacylglyceryl transfer). Functionally, catalyzes the transfer of the diacylglyceryl group from phosphatidylglycerol to the sulfhydryl group of the N-terminal cysteine of a prolipoprotein, the first step in the formation of mature lipoproteins. In Listeria innocua serovar 6a (strain ATCC BAA-680 / CLIP 11262), this protein is Phosphatidylglycerol--prolipoprotein diacylglyceryl transferase.